The chain runs to 833 residues: MRVPLSWLREYVDLPATETGRDVQAKLVSAGLEVERVEQLGADLKGPLAVGQVLTIEELEGFKKPIRFCTVDVGQANGTGEPQEIVCGARNFSVGDKVVVVLPGAVLPGNFAIAARKTYGRTSHGMICSGDELGMGDDGSGGIIVLPPEYEVGTDAIELLELVDEVLDIAVTPDRGYCLSLRGIARETAIAYGLPLRDPALLDVPAPNAFGHPVKISEPLGCDRFTARTVTGLDPEARSPIWLQRRLQKAGMRSISLAVDITNYVMLELGQPLHAYDRSRIQGAIGVRRAEQGEKLTTLDGTQRTLDAEDLVITDDRGPIGLAGVMGGAHTEIDDTEGTTTEVVIEAAHFDPISVARTARRHKLASEASKRFERGVDPLAASAAAQRTVDLLVLLAGGSADAGVTEVITPSAPHTITIPANHPDRVAGVEYGRETVVRRLQEVGCDVYGQDELLVTVPSWRPDLTDPNDLAEEVIRLEGYENLPSTLPKPPAGRGLTERQRLHRRVGRALAGAGYVEAPNYPFIGEHVFDQFGLAADDPKRRVVKLVNPLSEEEPALRTTLLPGLLGALRRNDGRGSHDLALFETGLVFHPRAEQRIAVRLPVDRRPTDEEIASLTAALPEQPRHAAVVLAGAREQAGWWGKGRPADWADAVEAARTLAREAGTELLVRAGQYGPWHPGRCAELAVVLDGEEKVIGYAGELHPGVLKTLGLPARTSAMELNLDALEQASAGVVKGPRISTFPVATQDVALVVDKTVPHADVEAALREGAGELLESIRLFDVYESEQLGAGKKSLAYALRFRAADRTLTVEEASTARDAAVALAAERTGAALRS.

The tRNA-binding domain occupies 42–157 (ADLKGPLAVG…PEYEVGTDAI (116 aa)). In terms of domain architecture, B5 spans 411-485 (SAPHTITIPA…RLEGYENLPS (75 aa)). Mg(2+) is bound by residues aspartate 463, aspartate 469, glutamate 472, and glutamate 473. An FDX-ACB domain is found at 739 to 832 (STFPVATQDV…AAERTGAALR (94 aa)).

It belongs to the phenylalanyl-tRNA synthetase beta subunit family. Type 1 subfamily. As to quaternary structure, tetramer of two alpha and two beta subunits. Mg(2+) is required as a cofactor.

It is found in the cytoplasm. It carries out the reaction tRNA(Phe) + L-phenylalanine + ATP = L-phenylalanyl-tRNA(Phe) + AMP + diphosphate + H(+). The protein is Phenylalanine--tRNA ligase beta subunit of Streptomyces avermitilis (strain ATCC 31267 / DSM 46492 / JCM 5070 / NBRC 14893 / NCIMB 12804 / NRRL 8165 / MA-4680).